Reading from the N-terminus, the 115-residue chain is Holo-[acyl-carrier-protein] synthase (115 aa).

Positions 8 and 56 each coordinate Mg(2+).

This sequence belongs to the P-Pant transferase superfamily. AcpS family. Mg(2+) serves as cofactor.

It localises to the cytoplasm. The catalysed reaction is apo-[ACP] + CoA = holo-[ACP] + adenosine 3',5'-bisphosphate + H(+). Its function is as follows. Transfers the 4'-phosphopantetheine moiety from coenzyme A to a Ser of acyl-carrier-protein. In Ureaplasma parvum serovar 3 (strain ATCC 27815 / 27 / NCTC 11736), this protein is Holo-[acyl-carrier-protein] synthase.